The sequence spans 286 residues: Shikimate dehydrogenase (NADP(+)) (286 aa).

Residues 21 to 23 (TLS) and threonine 68 contribute to the shikimate site. The active-site Proton acceptor is the lysine 72. Glutamate 84 serves as a coordination point for NADP(+). 2 residues coordinate shikimate: asparagine 93 and aspartate 108. Residues 132–136 (GNGGA) and leucine 230 each bind NADP(+). Position 232 (tyrosine 232) interacts with shikimate. NADP(+) is bound at residue glycine 253.

The protein belongs to the shikimate dehydrogenase family. Homodimer.

It carries out the reaction shikimate + NADP(+) = 3-dehydroshikimate + NADPH + H(+). The protein operates within metabolic intermediate biosynthesis; chorismate biosynthesis; chorismate from D-erythrose 4-phosphate and phosphoenolpyruvate: step 4/7. Involved in the biosynthesis of the chorismate, which leads to the biosynthesis of aromatic amino acids. Catalyzes the reversible NADPH linked reduction of 3-dehydroshikimate (DHSA) to yield shikimate (SA). In Microcystis aeruginosa (strain NIES-843 / IAM M-2473), this protein is Shikimate dehydrogenase (NADP(+)).